The chain runs to 229 residues: Platelet-activating factor acetylhydrolase IB subunit alpha2 (229 aa).

Serine 2 is modified (N-acetylserine). Serine 2 bears the Phosphoserine mark. Serine 48 is an active-site residue. Serine 64 bears the Phosphoserine mark. Residues aspartate 193 and histidine 196 contribute to the active site. Threonine 220 carries the phosphothreonine modification.

This sequence belongs to the 'GDSL' lipolytic enzyme family. Platelet-activating factor acetylhydrolase IB beta/gamma subunits subfamily. Forms a catalytic dimer which is either homodimer (alpha2/alpha2 homodimer) or heterodimer with PAFAH1B3 (alpha2/alpha1 heterodimer). Component of the cytosolic (PAF-AH (I)) heterotetrameric enzyme, which is composed of PAFAH1B1 (beta), PAFAH1B2 (alpha2) and PAFAH1B3 (alpha1) subunits. The catalytic activity of the enzyme resides in the alpha1 (PAFAH1B3) and alpha2 (PAFAH1B2) subunits, whereas the beta subunit (PAFAH1B1) has regulatory activity. Trimer formation is not essential for the catalytic activity. Interacts (homodimer form) with PAFAH1B1 (homodimer form); PAFAH1B2 competes with NDEL1 for PAFAH1B1 binding. Interacts with VLDLR; this interaction may modulate the Reelin pathway.

The protein localises to the cytoplasm. It catalyses the reaction a 1-O-alkyl-2-acetyl-sn-glycero-3-phosphocholine + H2O = a 1-O-alkyl-sn-glycero-3-phosphocholine + acetate + H(+). The enzyme catalyses 1-O-hexadecyl-2-acetyl-sn-glycero-3-phosphocholine + H2O = 1-O-hexadecyl-sn-glycero-3-phosphocholine + acetate + H(+). The catalysed reaction is 1-O-hexadecyl-2-acetyl-sn-glycero-3-phosphate + H2O = 1-O-hexadecyl-sn-glycero-3-phosphate + acetate + H(+). It carries out the reaction 1-O-hexadecyl-2-acetyl-sn-glycero-3-phosphoethanolamine + H2O = 1-O-hexadecyl-sn-glycero-3-phosphoethanolamine + acetate + H(+). With respect to regulation, beta subunit (PAFAH1B1) stimulates the acetylhydrolase activity of the alpha2/alpha2 catalytic homodimer. In terms of biological role, alpha2 catalytic subunit of the cytosolic type I platelet-activating factor (PAF) acetylhydrolase (PAF-AH (I)) heterotetrameric enzyme that catalyzes the hydrolyze of the acetyl group at the sn-2 position of PAF and its analogs and modulates the action of PAF. The activity and substrate specificity of PAF-AH (I) are affected by its subunit composition. The alpha2/alpha2 homodimer (PAFAH1B2/PAFAH1B2 homodimer) hydrolyzes PAF and 1-O-alkyl-2-acetyl-sn-glycero-3-phosphorylethanolamine (AAGPE) more efficiently than 1-O-alkyl-2-acetyl-sn-glycero-3-phosphoric acid (AAGPA). In contrast, the alpha1/alpha2 heterodimer(PAFAH1B3/PAFAH1B3 heterodimer) hydrolyzes AAGPA more efficiently than PAF, but has little hydrolytic activity towards AAGPE. May play a role in male germ cell meiosis during the late pachytenestage and meiotic divisions as well as early spermiogenesis. The chain is Platelet-activating factor acetylhydrolase IB subunit alpha2 from Pongo abelii (Sumatran orangutan).